A 178-amino-acid chain; its full sequence is Large ribosomal subunit protein uL6 (178 aa).

It belongs to the universal ribosomal protein uL6 family. In terms of assembly, part of the 50S ribosomal subunit.

This protein binds to the 23S rRNA, and is important in its secondary structure. It is located near the subunit interface in the base of the L7/L12 stalk, and near the tRNA binding site of the peptidyltransferase center. The chain is Large ribosomal subunit protein uL6 from Exiguobacterium sibiricum (strain DSM 17290 / CCUG 55495 / CIP 109462 / JCM 13490 / 255-15).